The following is a 247-amino-acid chain: Protein NipSnap homolog 3B (247 aa).

N6-succinyllysine occurs at positions 45 and 57.

Belongs to the NipSnap family.

This chain is Protein NipSnap homolog 3B (NIPSNAP3B), found in Homo sapiens (Human).